The primary structure comprises 323 residues: C-type lectin domain family 11 member A (323 aa).

An N-terminal signal peptide occupies residues Met1–Gly21. 2 disordered regions span residues Leu55 to Asp106 and Leu272 to Asn295. A Cell attachment site motif is present at residues Arg61 to Asp63. Residues Glu74–Ala90 are compositionally biased toward acidic residues. Residues Leu183–Glu320 form the C-type lectin domain. Cystine bridges form between Cys204–Cys319 and Cys296–Cys311.

O-glycosylated. Probably sulfated on the O-glycans. In terms of tissue distribution, expressed in skeletal tissues including bone marrow, chondrocytes, primary ossification center-associated cells, the perichondrium and periosteum. Lower levels of expression were detected in spleen, thymus, appendix and fetal liver.

The protein localises to the cytoplasm. It is found in the secreted. Functionally, promotes osteogenesis by stimulating the differentiation of mesenchymal progenitors into mature osteoblasts. Important for repair and maintenance of adult bone. The polypeptide is C-type lectin domain family 11 member A (CLEC11A) (Homo sapiens (Human)).